A 433-amino-acid chain; its full sequence is 23S rRNA (uracil(1939)-C(5))-methyltransferase RlmD (433 aa).

The region spanning 10 to 68 (RTTTRQIITVSVNDLDSFGQGVARHNGKTLFIPGLLSQENAEVTVTEDKKQYARAKVVR) is the TRAM domain. [4Fe-4S] cluster is bound by residues cysteine 81, cysteine 87, cysteine 90, and cysteine 162. S-adenosyl-L-methionine is bound by residues glutamine 265, phenylalanine 294, asparagine 299, glutamate 315, asparagine 342, and aspartate 363. Cysteine 389 functions as the Nucleophile in the catalytic mechanism.

This sequence belongs to the class I-like SAM-binding methyltransferase superfamily. RNA M5U methyltransferase family. RlmD subfamily.

The enzyme catalyses uridine(1939) in 23S rRNA + S-adenosyl-L-methionine = 5-methyluridine(1939) in 23S rRNA + S-adenosyl-L-homocysteine + H(+). In terms of biological role, catalyzes the formation of 5-methyl-uridine at position 1939 (m5U1939) in 23S rRNA. This Shigella dysenteriae serotype 1 (strain Sd197) protein is 23S rRNA (uracil(1939)-C(5))-methyltransferase RlmD.